A 146-amino-acid polypeptide reads, in one-letter code: UPF0742 protein C1348.03 (146 aa).

A helical transmembrane segment spans residues 38–60; the sequence is LTVKYCLAVKLLIYLLYCWYIYS.

Belongs to the UPF0742 family.

Its subcellular location is the cytoplasm. It is found in the nucleus membrane. The chain is UPF0742 protein C1348.03 from Schizosaccharomyces pombe (strain 972 / ATCC 24843) (Fission yeast).